The chain runs to 223 residues: Virulence transcriptional regulatory protein PhoP (223 aa).

The Response regulatory domain maps to 2–116 (RVLVVEDNAL…EVMARMQALM (115 aa)). Asp51 carries the post-translational modification 4-aspartylphosphate. Positions 124 to 222 (SQVISLPPFQ…VRGQGYLFEL (99 aa)) form a DNA-binding region, ompR/PhoB-type.

In terms of processing, phosphorylated by PhoQ.

Its subcellular location is the cytoplasm. Its function is as follows. Member of the two-component regulatory system PhoQ/PhoP involved in virulence and adaptation to low Mg(2+) environments. Necessary for resistance to killing by polymorphonuclear leukocytes (PMNs) and cationic antimicrobial peptides (CAMP) they produce. This Shigella flexneri protein is Virulence transcriptional regulatory protein PhoP (phoP).